A 325-amino-acid chain; its full sequence is ADP-ribose glycohydrolase MACROD1 (325 aa).

N6-succinyllysine is present on residues lysine 96, lysine 103, and lysine 129. A Glycyl lysine isopeptide (Lys-Gly) (interchain with G-Cter in SUMO2) cross-link involves residue lysine 138. In terms of domain architecture, Macro spans 141 to 322; it reads EPRYKKDKQL…IYRSRLPHYF (182 aa). 159 to 161 contacts substrate; the sequence is SDI. The residue at position 163 (lysine 163) is an N6-acetyllysine. Substrate-binding positions include 172–174, 179–184, 267–273, and phenylalanine 306; these read AAN, GGGGVD, and ISTGVFG.

This sequence belongs to the MacroD-type family. MacroD1/2-like subfamily. As to quaternary structure, interacts with ESR1; Interacts in a manner that is estrogen independent but is enhanced by estrogen. Interacts (via macro domain) with AR.

It localises to the nucleus. It catalyses the reaction 3''-O-acetyl-ADP-D-ribose + H2O = ADP-D-ribose + acetate + H(+). The enzyme catalyses 2''-O-acetyl-ADP-D-ribose + H2O = ADP-D-ribose + acetate + H(+). It carries out the reaction 4-O-(ADP-D-ribosyl)-L-aspartyl-[protein] + H2O = L-aspartyl-[protein] + ADP-D-ribose + H(+). The catalysed reaction is 5-O-(ADP-D-ribosyl)-L-glutamyl-[protein] + H2O = L-glutamyl-[protein] + ADP-D-ribose + H(+). It catalyses the reaction alpha-NAD(+) + H2O = ADP-D-ribose + nicotinamide + H(+). With respect to regulation, subject to competitive inhibition by the product ADP-ribose. In terms of biological role, removes ADP-ribose from aspartate and glutamate residues in proteins bearing a single ADP-ribose moiety. Inactive towards proteins bearing poly-ADP-ribose. Deacetylates O-acetyl-ADP ribose, a signaling molecule generated by the deacetylation of acetylated lysine residues in histones and other proteins. Plays a role in estrogen signaling. Binds to androgen receptor (AR) and amplifies the transactivation function of AR in response to androgen. May play an important role in carcinogenesis and/or progression of hormone-dependent cancers by feed-forward mechanism that activates ESR1 transactivation. Could be an ESR1 coactivator, providing a positive feedback regulatory loop for ESR1 signal transduction. Could be involved in invasive growth by down-regulating CDH1 in endometrial cancer cells. Enhances ESR1-mediated transcription activity. This chain is ADP-ribose glycohydrolase MACROD1, found in Homo sapiens (Human).